A 103-amino-acid chain; its full sequence is MMESQKIRIRLKAFDHRILDQSTGEIVQTARRTGADIRGPIPLPTKINRYTVLRSPHVDKKSREQFEIRTHKRIIDIVNPTPQTVDALMKLDLAAGVNVEIKL.

The protein belongs to the universal ribosomal protein uS10 family. In terms of assembly, part of the 30S ribosomal subunit.

In terms of biological role, involved in the binding of tRNA to the ribosomes. The polypeptide is Small ribosomal subunit protein uS10 (Magnetococcus marinus (strain ATCC BAA-1437 / JCM 17883 / MC-1)).